Reading from the N-terminus, the 563-residue chain is Zinc finger CCHC domain-containing protein 7 (563 aa).

Disordered stretches follow at residues serine 41–alanine 64 and serine 133–serine 157. Over residues serine 133 to proline 142 the composition is skewed to polar residues. Positions glutamine 143–serine 157 are enriched in low complexity. 5 consecutive CCHC-type zinc fingers follow at residues valine 265–valine 282, proline 287–serine 304, arginine 305–glutamate 322, lysine 328–glutamate 345, and valine 372–glutamate 389. Positions lysine 443–aspartate 494 are disordered. The span at proline 449–arginine 463 shows a compositional bias: basic residues. Positions lysine 464–lysine 476 are enriched in basic and acidic residues. Residues glutamine 477–serine 486 are compositionally biased toward basic residues.

As to quaternary structure, component of a nucleolar TRAMP-like complex, an ATP-dependent exosome regulatory complex consisting of a helicase (MTREX), an oligadenylate polymerase (PAPD5 or PAPD7), and a substrate specific RNA-binding factor (ZCCHC7 or ZCCHC8). Several TRAMP-like complexes exist with specific compositions and are associated with nuclear, or nucleolar RNA exosomes.

It is found in the nucleus. The protein localises to the nucleolus. This chain is Zinc finger CCHC domain-containing protein 7 (zcchc7), found in Xenopus laevis (African clawed frog).